Here is a 345-residue protein sequence, read N- to C-terminus: Biotin synthase (345 aa).

Residues 67–295 (YKVQLASLLS…KSRIRLSAGR (229 aa)) form the Radical SAM core domain. 3 residues coordinate [4Fe-4S] cluster: cysteine 82, cysteine 86, and cysteine 89. [2Fe-2S] cluster-binding residues include cysteine 126, cysteine 158, cysteine 218, and arginine 290.

This sequence belongs to the radical SAM superfamily. Biotin synthase family. As to quaternary structure, homodimer. [4Fe-4S] cluster is required as a cofactor. The cofactor is [2Fe-2S] cluster.

The catalysed reaction is (4R,5S)-dethiobiotin + (sulfur carrier)-SH + 2 reduced [2Fe-2S]-[ferredoxin] + 2 S-adenosyl-L-methionine = (sulfur carrier)-H + biotin + 2 5'-deoxyadenosine + 2 L-methionine + 2 oxidized [2Fe-2S]-[ferredoxin]. Its pathway is cofactor biosynthesis; biotin biosynthesis; biotin from 7,8-diaminononanoate: step 2/2. Catalyzes the conversion of dethiobiotin (DTB) to biotin by the insertion of a sulfur atom into dethiobiotin via a radical-based mechanism. This chain is Biotin synthase, found in Prochlorococcus marinus (strain NATL1A).